A 695-amino-acid chain; its full sequence is ATP-dependent permease MDL1, mitochondrial (695 aa).

A mitochondrion-targeting transit peptide spans 1 to 100; the sequence is MIVRMIRLCK…RLFVLSKPES (100 aa). A run of 5 helical transmembrane segments spans residues 103–123, 156–176, 242–262, 337–357, and 372–392; these read IGLALLLILISSSVSMAVPSV, FTALGAVFIIGAVANASRIII, FVGFGMMSFLSWKLTCVMMIL, GLFFGSTGLVGNTAMLSLLLV, and LSSFMMYAVYTGSSLFGLSSF. The ABC transmembrane type-1 domain occupies 103–398; the sequence is IGLALLLILI…LSSFYSELMK (296 aa). One can recognise an ABC transporter domain in the interval 432-673; the sequence is IVFKNVSFTY…PNSELNALLA (242 aa). 467 to 474 is a binding site for ATP; the sequence is GPSGSGKS.

Belongs to the ABC transporter superfamily. ABCB family. Mitochondrial peptide exporter (TC 3.A.1.212) subfamily.

Its subcellular location is the mitochondrion inner membrane. In terms of biological role, mediates export of peptides with molecular masses of 2100 to 600 daltons generated upon proteolysis of mitochondrial inner membrane proteins. This chain is ATP-dependent permease MDL1, mitochondrial (MDL1), found in Saccharomyces cerevisiae (strain ATCC 204508 / S288c) (Baker's yeast).